Reading from the N-terminus, the 195-residue chain is Dephospho-CoA kinase (195 aa).

One can recognise a DPCK domain in the interval 3-195 (KIGLTGGIGS…ANMKNVIAEI (193 aa)). 11 to 16 (GSGKST) serves as a coordination point for ATP.

The protein belongs to the CoaE family.

The protein localises to the cytoplasm. It catalyses the reaction 3'-dephospho-CoA + ATP = ADP + CoA + H(+). Its pathway is cofactor biosynthesis; coenzyme A biosynthesis; CoA from (R)-pantothenate: step 5/5. In terms of biological role, catalyzes the phosphorylation of the 3'-hydroxyl group of dephosphocoenzyme A to form coenzyme A. The sequence is that of Dephospho-CoA kinase from Corynebacterium glutamicum (Brevibacterium saccharolyticum).